The primary structure comprises 516 residues: uncharacterized protein (516 aa).

PFTB repeat units follow at residues 45–86 (RQDA…QRAD) and 401–443 (DERA…DGSE).

This is an uncharacterized protein from Sinorhizobium fredii (strain NBRC 101917 / NGR234).